Consider the following 64-residue polypeptide: Ferredoxin-2 (64 aa).

4Fe-4S ferredoxin-type domains lie at 3–31 (KYLY…MSSA) and 34–64 (YAEV…WREE). [4Fe-4S] cluster is bound by residues cysteine 12, cysteine 15, cysteine 18, and cysteine 54.

As to quaternary structure, homodimer. The cofactor is [4Fe-4S] cluster.

Functionally, ferredoxins are iron-sulfur proteins that transfer electrons in a wide variety of metabolic reactions. The sequence is that of Ferredoxin-2 from Nitratidesulfovibrio vulgaris (strain DSM 19637 / Miyazaki F) (Desulfovibrio vulgaris).